A 340-amino-acid polypeptide reads, in one-letter code: Ferrochelatase (340 aa).

The Fe cation site is built by H189 and E292.

This sequence belongs to the ferrochelatase family.

It is found in the cytoplasm. The enzyme catalyses heme b + 2 H(+) = protoporphyrin IX + Fe(2+). It participates in porphyrin-containing compound metabolism; protoheme biosynthesis; protoheme from protoporphyrin-IX: step 1/1. Catalyzes the ferrous insertion into protoporphyrin IX. This is Ferrochelatase from Pseudomonas syringae pv. syringae (strain B728a).